A 395-amino-acid chain; its full sequence is S-adenosylmethionine synthase (395 aa).

H16 contributes to the ATP binding site. D18 lines the Mg(2+) pocket. E44 contributes to the K(+) binding site. L-methionine-binding residues include E57 and Q100. The interval 100 to 110 (QSPDIAQGVDR) is flexible loop. Residues 167–169 (DAK), 233–234 (RF), D242, 248–249 (RK), A265, and K269 each bind ATP. D242 is an L-methionine binding site. Residue K273 participates in L-methionine binding.

It belongs to the AdoMet synthase family. As to quaternary structure, homotetramer; dimer of dimers. The cofactor is Mg(2+). K(+) serves as cofactor.

The protein localises to the cytoplasm. It catalyses the reaction L-methionine + ATP + H2O = S-adenosyl-L-methionine + phosphate + diphosphate. It participates in amino-acid biosynthesis; S-adenosyl-L-methionine biosynthesis; S-adenosyl-L-methionine from L-methionine: step 1/1. In terms of biological role, catalyzes the formation of S-adenosylmethionine (AdoMet) from methionine and ATP. The overall synthetic reaction is composed of two sequential steps, AdoMet formation and the subsequent tripolyphosphate hydrolysis which occurs prior to release of AdoMet from the enzyme. This Burkholderia mallei (strain NCTC 10247) protein is S-adenosylmethionine synthase.